The primary structure comprises 207 residues: MPNVALFKQDGTQNGEITLNEEIFGIEPNESVVYDAIIMQRASLRQGTHAVKNRSAVRGGGRKPWRQKGTGRARQGSIRSPQWRGGGVVFGPTPRSYSYKFPKKVRRLAMKSVLSDKVAENNLVAVEGLSFDAPKTKEFKQVLANLSIDTKVLVVLENGNDFAALSARNLPNVSVVTSDNVSVLDVVSANKVLATQTALTQIEEVLA.

The disordered stretch occupies residues 49–78 (HAVKNRSAVRGGGRKPWRQKGTGRARQGSI). The span at 60 to 71 (GGRKPWRQKGTG) shows a compositional bias: basic residues.

This sequence belongs to the universal ribosomal protein uL4 family. In terms of assembly, part of the 50S ribosomal subunit.

In terms of biological role, one of the primary rRNA binding proteins, this protein initially binds near the 5'-end of the 23S rRNA. It is important during the early stages of 50S assembly. It makes multiple contacts with different domains of the 23S rRNA in the assembled 50S subunit and ribosome. Functionally, forms part of the polypeptide exit tunnel. This is Large ribosomal subunit protein uL4 from Enterococcus faecalis (strain ATCC 700802 / V583).